The chain runs to 77 residues: Rhodotorucin-A peptides type 2 (77 aa).

A propeptide spanning residues 1–3 (MVA) is cleaved from the precursor. Cys14 is lipidated: S-farnesyl cysteine. Positions 15–18 (TVAK) are excised as a propeptide. Residue Cys29 is the site of S-farnesyl cysteine attachment. Residues 30–33 (TVSK) constitute a propeptide that is removed on maturation. The S-farnesyl cysteine moiety is linked to residue Cys44. Positions 45–48 (TVSK) are excised as a propeptide. A lipid anchor (S-farnesyl cysteine) is attached at Cys59. Positions 60-63 (TVSK) are excised as a propeptide. Cys74 carries S-farnesyl cysteine lipidation. Residues 75–77 (TVA) constitute a propeptide that is removed on maturation.

The protein localises to the cell membrane. In terms of biological role, rhodotorucin-A is a mating pheromone in cells of mating type A of Rhodosporidium toruloides. The chain is Rhodotorucin-A peptides type 2 (RHA2) from Rhodotorula toruloides (Yeast).